The following is a 552-amino-acid chain: Arginine--tRNA ligase (552 aa).

The 'HIGH' region motif lies at Ala123–Arg133.

It belongs to the class-I aminoacyl-tRNA synthetase family. Monomer.

It is found in the cytoplasm. It catalyses the reaction tRNA(Arg) + L-arginine + ATP = L-arginyl-tRNA(Arg) + AMP + diphosphate. This Chlorobium luteolum (strain DSM 273 / BCRC 81028 / 2530) (Pelodictyon luteolum) protein is Arginine--tRNA ligase.